Consider the following 256-residue polypeptide: Imidazole glycerol phosphate synthase subunit HisF (256 aa).

Active-site residues include Asp11 and Asp130.

It belongs to the HisA/HisF family. In terms of assembly, heterodimer of HisH and HisF.

Its subcellular location is the cytoplasm. The enzyme catalyses 5-[(5-phospho-1-deoxy-D-ribulos-1-ylimino)methylamino]-1-(5-phospho-beta-D-ribosyl)imidazole-4-carboxamide + L-glutamine = D-erythro-1-(imidazol-4-yl)glycerol 3-phosphate + 5-amino-1-(5-phospho-beta-D-ribosyl)imidazole-4-carboxamide + L-glutamate + H(+). It functions in the pathway amino-acid biosynthesis; L-histidine biosynthesis; L-histidine from 5-phospho-alpha-D-ribose 1-diphosphate: step 5/9. Functionally, IGPS catalyzes the conversion of PRFAR and glutamine to IGP, AICAR and glutamate. The HisF subunit catalyzes the cyclization activity that produces IGP and AICAR from PRFAR using the ammonia provided by the HisH subunit. This Cupriavidus metallidurans (strain ATCC 43123 / DSM 2839 / NBRC 102507 / CH34) (Ralstonia metallidurans) protein is Imidazole glycerol phosphate synthase subunit HisF.